Consider the following 437-residue polypeptide: Methylenetetrahydrofolate--tRNA-(uracil-5-)-methyltransferase TrmFO (437 aa).

10 to 15 (GGGLAG) is an FAD binding site.

Belongs to the MnmG family. TrmFO subfamily. The cofactor is FAD.

Its subcellular location is the cytoplasm. It carries out the reaction uridine(54) in tRNA + (6R)-5,10-methylene-5,6,7,8-tetrahydrofolate + NADH + H(+) = 5-methyluridine(54) in tRNA + (6S)-5,6,7,8-tetrahydrofolate + NAD(+). It catalyses the reaction uridine(54) in tRNA + (6R)-5,10-methylene-5,6,7,8-tetrahydrofolate + NADPH + H(+) = 5-methyluridine(54) in tRNA + (6S)-5,6,7,8-tetrahydrofolate + NADP(+). In terms of biological role, catalyzes the folate-dependent formation of 5-methyl-uridine at position 54 (M-5-U54) in all tRNAs. The protein is Methylenetetrahydrofolate--tRNA-(uracil-5-)-methyltransferase TrmFO of Geotalea daltonii (strain DSM 22248 / JCM 15807 / FRC-32) (Geobacter daltonii).